The following is a 1024-amino-acid chain: NLR family CARD domain-containing protein 4 (1024 aa).

Positions 1 to 88 (MNFIRNNRRA…FVYQDLTGQN (88 aa)) constitute a CARD domain. The segment at 95–298 (EEDLNVLAQN…HVGALTAEVG (204 aa)) is nucleotide-binding domain (NBD). ATP contacts are provided by residues threonine 135, 172 to 177 (GKGKST), and histidine 443. Residues 163 to 476 (SPCLIEGESG…VSKGNSYLNK (314 aa)) form the NACHT domain. Positions 356–463 (AHTQTMLFQT…RLSSLLTSKE (108 aa)) are winged-helix domain (WHD). A Phosphoserine modification is found at serine 533. LRR repeat units follow at residues 578-598 (FFQG…LFDF), 656-679 (KQEF…DIKY), 735-758 (VTGL…LIDS), 762-785 (LKNL…NLAE), 787-812 (LRSL…DYIV), 824-847 (EMKL…LHNL), 848-870 (IKLS…ALQE), 878-902 (LGEL…LLKQ), 911-933 (KLGL…FLEM), 936-963 (LRDL…VFEN), 965-985 (KQLV…ALVR), and 999-1021 (EVKL…TFKL).

As to quaternary structure, homooligomer; homooligomerizes following activation of Naip proteins by pathogenic proteins such as S.typhimurium (Salmonella) flagellin or PrgJ. Component of the NLRC4 inflammasome, at least composed of NLRC4, caspase-1 (CASP1) and some NAIP protein (Naip, Naip2 or Naip5). Interacts with Naip5 and Naip6; following Naip5 and Naip6 engagement by Salmonella flagellin. Interacts with Naip2; following Naip2 engagement by Salmonella PrgJ. The inflammasome is a huge complex that contains multiple copies of NLRC4 and a single Naip protein chain. Some NLRC4 inflammasomes contain PYCARD/ASC, while some others directly contact and activate CASP1. Interacts with EIF2AK2/PKR. Phosphorylated at Ser-533 following infection of macrophages with S.typhimurium (Salmonella). Phosphorylation is essential for NLRC4 inflammasome function to promote caspase-1 activation and pyroptosis. PRKCD phosphorylates Ser-533 in vitro. Expressed by intestinal mononuclear phagocytes.

The protein resides in the cytoplasm. It localises to the cytosol. Its subcellular location is the inflammasome. Its function is as follows. Key component of inflammasomes that indirectly senses specific proteins from pathogenic bacteria and fungi and responds by assembling an inflammasome complex that promotes caspase-1 activation, cytokine production and macrophage pyroptosis. The NLRC4 inflammasome is activated as part of the innate immune response to a range of intracellular bacteria. It senses pathogenic proteins of the type III secretion system (T3SS) and type IV secretion system (T4SS) such as flagellin and PrgJ-like rod proteins via the Naip proteins (Naip1, Naip2 or Naip5): specific Naip proteins recognize and bind pathogenic proteins, driving assembly and activation of the NLRC4 inflammasome. The NLRC4 inflammasome senses Gram-negative bacteria such as L.pneumophila and P.aeruginosa, enteric pathogens S.typhimurium (Salmonella) and S.flexneri and fungal pathogen C.albicans. In intestine, the NLRC4 inflammasome is able to discriminate between commensal and pathogenic bacteria and specifically drives production of interleukin-1 beta (IL1B) in response to infection by Salmonella or P.aeruginosa. In case of L.pneumophila infection the inflammasome acts by activating caspase-7. This chain is NLR family CARD domain-containing protein 4 (Nlrc4), found in Mus musculus (Mouse).